A 141-amino-acid polypeptide reads, in one-letter code: Protein X (141 aa).

The segment at 25 to 52 (SSGPSFPRPAAGSAASSASSPSPSDDSD) is disordered. The interval 68 to 113 (PCCLVFTCADLRTMDSTVNFVSWHANRQLGMPSKDLWTPYIKDQLL) is mitochondrial targeting sequence.

The protein belongs to the orthohepadnavirus protein X family. May form homodimer. May interact with host CEBPA, CFLAR, CREB1, DDB1, E4F1, HBXIP, HSPD1/HSP60, NFKBIA, POLR2E and SMAD4. Interacts with host SMC5-SMC6 complex and induces its degradation. Interacts with host TRPC4AP; leading to prevent ubiquitination of TRPC4AP. Interacts with host PLSCR1; this interaction promotes ubiquitination and degradation of HBx and impairs HBx-mediated cell proliferation. Post-translationally, a fraction may be phosphorylated in insect cells and HepG2 cells, a human hepatoblastoma cell line. Phosphorylated in vitro by host protein kinase C or mitogen-activated protein kinase. N-acetylated in insect cells.

It is found in the host cytoplasm. Its subcellular location is the host nucleus. The protein resides in the host mitochondrion. Its function is as follows. Multifunctional protein that plays a role in silencing host antiviral defenses and promoting viral transcription. Does not seem to be essential for HBV infection. May be directly involved in development of cirrhosis and liver cancer (hepatocellular carcinoma). Most of cytosolic activities involve modulation of cytosolic calcium. The effect on apoptosis is controversial depending on the cell types in which the studies have been conducted. May induce apoptosis by localizing in mitochondria and causing loss of mitochondrial membrane potential. May also modulate apoptosis by binding host CFLAR, a key regulator of the death-inducing signaling complex (DISC). Promotes viral transcription by using the host E3 ubiquitin ligase DDB1 to target the SMC5-SMC6 complex to proteasomal degradation. This host complex would otherwise bind to viral episomal DNA, and prevents its transcription. Moderately stimulates transcription of many different viral and cellular transcription elements. Promoters and enhancers stimulated by HBx contain DNA binding sites for NF-kappa-B, AP-1, AP-2, c-EBP, ATF/CREB, or the calcium-activated factor NF-AT. The protein is Protein X of Woodchuck hepatitis B virus (isolate 2) (WHV).